The chain runs to 635 residues: Phosphatidylserine decarboxylase proenzyme 2 (635 aa).

The region spanning 20 to 146 (KLQKFRIHRR…VVQEPESTCK (127 aa)) is the C2 domain. 2 consecutive EF-hand domains span residues 174–209 (TERRFAKRILSIVDYNEDGQLSFSEFSDLIKAFGNL) and 210–245 (VAANKKEELFKAADLNGDGVVTIDELAALLALQQEQ). Residues aspartate 187, asparagine 189, aspartate 191, glutamine 193, glutamate 198, aspartate 223, asparagine 225, aspartate 227, and glutamate 234 each contribute to the Ca(2+) site. Catalysis depends on charge relay system; for autoendoproteolytic cleavage activity residues aspartate 443, histidine 499, and serine 587. The active-site Schiff-base intermediate with substrate; via pyruvic acid; for decarboxylase activity is serine 587. Serine 587 carries the post-translational modification Pyruvic acid (Ser); by autocatalysis.

The protein belongs to the phosphatidylserine decarboxylase family. PSD-B subfamily. Eukaryotic type II sub-subfamily. In terms of assembly, heterodimer of a large membrane-associated beta subunit and a small pyruvoyl-containing alpha subunit. Requires pyruvate as cofactor. In terms of processing, is synthesized initially as an inactive proenzyme. Formation of the active enzyme involves a self-maturation process in which the active site pyruvoyl group is generated from an internal serine residue via an autocatalytic post-translational modification. Two non-identical subunits are generated from the proenzyme in this reaction, and the pyruvate is formed at the N-terminus of the alpha chain, which is derived from the carboxyl end of the proenzyme. The autoendoproteolytic cleavage occurs by a canonical serine protease mechanism, in which the side chain hydroxyl group of the serine supplies its oxygen atom to form the C-terminus of the beta chain, while the remainder of the serine residue undergoes an oxidative deamination to produce ammonia and the pyruvoyl prosthetic group on the alpha chain. During this reaction, the Ser that is part of the protease active site of the proenzyme becomes the pyruvoyl prosthetic group, which constitutes an essential element of the active site of the mature decarboxylase. In terms of tissue distribution, highly expressed in flowers and at lower levels in leaves.

Its subcellular location is the vacuole membrane. The catalysed reaction is a 1,2-diacyl-sn-glycero-3-phospho-L-serine + H(+) = a 1,2-diacyl-sn-glycero-3-phosphoethanolamine + CO2. It participates in phospholipid metabolism; phosphatidylethanolamine biosynthesis; phosphatidylethanolamine from CDP-diacylglycerol: step 2/2. Its function is as follows. Catalyzes the formation of phosphatidylethanolamine (PtdEtn) from phosphatidylserine (PtdSer). Plays a central role in phospholipid metabolism and in the interorganelle trafficking of phosphatidylserine. Contributes only to a minor proportion of PtdEtn production. This Arabidopsis thaliana (Mouse-ear cress) protein is Phosphatidylserine decarboxylase proenzyme 2 (PSD2).